A 54-amino-acid polypeptide reads, in one-letter code: Sec-independent protein translocase protein TatA (54 aa).

A helical membrane pass occupies residues 1–21 (MGMSFSHLLIVLLIIFVLFGA).

The protein belongs to the TatA/E family. As to quaternary structure, the Tat system comprises two distinct complexes: a TatABC complex, containing multiple copies of TatA, TatB and TatC subunits, and a separate TatA complex, containing only TatA subunits. Substrates initially bind to the TatABC complex, which probably triggers association of the separate TatA complex to form the active translocon.

Its subcellular location is the cell inner membrane. Part of the twin-arginine translocation (Tat) system that transports large folded proteins containing a characteristic twin-arginine motif in their signal peptide across membranes. TatA could form the protein-conducting channel of the Tat system. This is Sec-independent protein translocase protein TatA from Rickettsia canadensis (strain McKiel).